Here is a 115-residue protein sequence, read N- to C-terminus: Macrophage migration inhibitory factor (115 aa).

The Proton acceptor; via imino nitrogen role is filled by Pro-2. Positions 33 and 65 each coordinate substrate. At Lys-78 the chain carries N6-acetyllysine; alternate. Position 78 is an N6-succinyllysine; alternate (Lys-78). Asn-98 lines the substrate pocket.

The protein belongs to the MIF family. Homotrimer. Interacts with CXCR2 extracellular domain. Interacts with the CD74 extracellular domain, USO1, COPS5 and BNIPL.

The protein localises to the secreted. It is found in the cytoplasm. It carries out the reaction 3-phenylpyruvate = enol-phenylpyruvate. The catalysed reaction is L-dopachrome = 5,6-dihydroxyindole-2-carboxylate. Pro-inflammatory cytokine involved in the innate immune response to bacterial pathogens. The expression of MIF at sites of inflammation suggests a role as mediator in regulating the function of macrophages in host defense. Counteracts the anti-inflammatory activity of glucocorticoids. Has phenylpyruvate tautomerase and dopachrome tautomerase activity (in vitro), but the physiological substrate is not known. It is not clear whether the tautomerase activity has any physiological relevance, and whether it is important for cytokine activity. The chain is Macrophage migration inhibitory factor from Homo sapiens (Human).